A 419-amino-acid chain; its full sequence is MKVSVLLGLQWGDEGKGKVVDVLTPKYDIVARFQGGPNAGHTLLFADRKYVLCSIPSGVFQGKVNIIGNGVVLDPILFKAETETLTSSCSNLVDKIYISRKAHLILPTHRLLDVAYETQKGNNKIGTTGKGIGPAYTDKVSRNGLRIGDIDYNFEEKYRYAIARHKELLHQMNFQYDLLPLEREWKKSIEVIKRFKRINSDNFINKALIGGRTVLAEGAQGTMLDVDFGSYPFVTSSNTICASACTGLGVAPAKIGDVFGIFKAYCTRVGSGPFPTELSDEIGEKLRNIGNEYGSITKRPRRCGWIDLVALRYAVMINGVTQLIMMKSDVLDTFDTVKACIAYEVNGQKMEDFPFEIGSSVKPIYTELVGWKTNMTKIKSENEFPKAFKDYLLFLEESLGVSIKIVSLGPDREQTIIRE.

GTP contacts are provided by residues 12-18 and 40-42; these read GDEGKGK and GHT. The active-site Proton acceptor is the Asp13. Asp13 and Gly40 together coordinate Mg(2+). IMP contacts are provided by residues 13-16, 38-41, Thr128, Arg142, Gln220, Thr235, and Arg299; these read DEGK and NAGH. The active-site Proton donor is His41. Residue 295–301 participates in substrate binding; that stretch reads SITKRPR. GTP-binding positions include Arg301, 327-329, and 407-409; these read KSD and SLG.

It belongs to the adenylosuccinate synthetase family. Homodimer. Mg(2+) serves as cofactor.

It is found in the cytoplasm. The catalysed reaction is IMP + L-aspartate + GTP = N(6)-(1,2-dicarboxyethyl)-AMP + GDP + phosphate + 2 H(+). It functions in the pathway purine metabolism; AMP biosynthesis via de novo pathway; AMP from IMP: step 1/2. Functionally, plays an important role in the de novo pathway of purine nucleotide biosynthesis. Catalyzes the first committed step in the biosynthesis of AMP from IMP. The chain is Adenylosuccinate synthetase from Azobacteroides pseudotrichonymphae genomovar. CFP2.